A 369-amino-acid chain; its full sequence is Succinyl-diaminopimelate desuccinylase (369 aa).

His77 provides a ligand contact to Zn(2+). The active site involves Asp79. Asp103 is a binding site for Zn(2+). Glu136 (proton acceptor) is an active-site residue. Glu137, Glu165, and His345 together coordinate Zn(2+).

The protein belongs to the peptidase M20A family. Requires Zn(2+) as cofactor. Co(2+) serves as cofactor.

The catalysed reaction is N-succinyl-(2S,6S)-2,6-diaminopimelate + H2O = (2S,6S)-2,6-diaminopimelate + succinate. It participates in amino-acid biosynthesis; L-lysine biosynthesis via DAP pathway; LL-2,6-diaminopimelate from (S)-tetrahydrodipicolinate (succinylase route): step 3/3. In Corynebacterium glutamicum (strain ATCC 13032 / DSM 20300 / JCM 1318 / BCRC 11384 / CCUG 27702 / LMG 3730 / NBRC 12168 / NCIMB 10025 / NRRL B-2784 / 534), this protein is Succinyl-diaminopimelate desuccinylase (dapE).